The chain runs to 472 residues: Levansucrase (472 aa).

The first 29 residues, 1 to 29, serve as a signal peptide directing secretion; the sequence is MNIKKIVKQATVLTFTTALLAGGATQAFA. The sucrose site is built by Trp85, Asp86, and Ser164. Catalysis depends on Asp86, which acts as the Nucleophile. Asp241 provides a ligand contact to Ca(2+). Arg246 and Asp247 together coordinate sucrose. Ca(2+)-binding residues include Gln272, Leu308, Asn310, and Asp339. Glu340 contacts sucrose. The active-site Proton donor/acceptor is the Glu342. Arg360 is a binding site for sucrose.

This sequence belongs to the glycosyl hydrolase 68 family.

It localises to the secreted. The enzyme catalyses [6)-beta-D-fructofuranosyl-(2-&gt;](n) alpha-D-glucopyranoside + sucrose = [6)-beta-D-fructofuranosyl-(2-&gt;](n+1) alpha-D-glucopyranoside + D-glucose. Ca(2+) may play an important structural role and promote stability of levansucrase. Catalyzes the synthesis of levan, a fructose polymer, by transferring the fructosyl moiety from sucrose to a growing acceptor molecule. Also displays sucrose hydrolase activity. This is Levansucrase from Bacillus amyloliquefaciens (Bacillus velezensis).